Reading from the N-terminus, the 154-residue chain is Deoxyuridine 5'-triphosphate nucleotidohydrolase (154 aa).

Substrate-binding positions include 64 to 66, asparagine 77, 81 to 83, and lysine 91; these read RSG and TID.

This sequence belongs to the dUTPase family. As to quaternary structure, homotrimer. Mg(2+) serves as cofactor.

The catalysed reaction is dUTP + H2O = dUMP + diphosphate + H(+). It participates in pyrimidine metabolism; dUMP biosynthesis; dUMP from dCTP (dUTP route): step 2/2. Functionally, this enzyme is involved in nucleotide metabolism: it produces dUMP, the immediate precursor of thymidine nucleotides and it decreases the intracellular concentration of dUTP so that uracil cannot be incorporated into DNA. The polypeptide is Deoxyuridine 5'-triphosphate nucleotidohydrolase (Mycobacterium marinum (strain ATCC BAA-535 / M)).